A 317-amino-acid chain; its full sequence is Mitochondrial thiamine pyrophosphate carrier 1 (317 aa).

A run of 6 helical transmembrane segments spans residues 21-41, 86-106, 122-142, 176-196, 207-227, and 281-300; these read AVSG…ARSV, VPAS…YAWL, LAVG…LDLL, GGAW…GIYE, LPWL…AAVF, and GLTM…LWVY. Solcar repeat units follow at residues 22 to 109, 116 to 201, and 206 to 306; these read VSGL…LNTA, PPQA…CTIA, and GLPW…CLRL.

The protein belongs to the mitochondrial carrier (TC 2.A.29) family.

It is found in the mitochondrion inner membrane. Functionally, mitochondrial transporter that mediates uptake of thiamine pyrophosphate (ThPP) into mitochondria. This is Mitochondrial thiamine pyrophosphate carrier 1 (TPC1) from Eremothecium gossypii (strain ATCC 10895 / CBS 109.51 / FGSC 9923 / NRRL Y-1056) (Yeast).